Here is a 483-residue protein sequence, read N- to C-terminus: MGLFDFSVKELHDKLVKKEISPFDLVSESFNRIESVEDKVGSFITLNKEAAFGVAEELGDAGIDPNNMLSGLPIGIKDNIVTKNLRTTAASKILENFDPIYDATVVSKLKNAQTINIGKLNMDEFAMGSSTETSYFHKTHNPWDLSRVPGGSSGGSASAVAAGEVLFSLGSDTGGSIRQPAAFCGVVGMKPTYGRVSRFGLIAFASSLDQIGPITKNVEDNAYLLEAISGLDANDSTSINQPVERFSDSLTGDIKGLRIGVPKEYLGEGVDPGVKQAVLDALKTLEKLGATWDEVSLPHSEYGVASYYILASSEASSNLSRFDGVRYGYRSPNATTLEELYTKTRSEGFGDEVKRRIMLGTYALSSGYYDAYYKKAQQARTLIKQDFVNVFENYDVIIGPSSPTTAFKIDGMINDPITMYSNDILTVPINLAGVPAISVPCGFSDGLPVGLQIIGNYFEESLLYKVAHAFEQETTFHKEKPNL.

Active-site charge relay system residues include K77 and S152. Catalysis depends on S176, which acts as the Acyl-ester intermediate.

The protein belongs to the amidase family. GatA subfamily. As to quaternary structure, heterotrimer of A, B and C subunits.

The catalysed reaction is L-glutamyl-tRNA(Gln) + L-glutamine + ATP + H2O = L-glutaminyl-tRNA(Gln) + L-glutamate + ADP + phosphate + H(+). In terms of biological role, allows the formation of correctly charged Gln-tRNA(Gln) through the transamidation of misacylated Glu-tRNA(Gln) in organisms which lack glutaminyl-tRNA synthetase. The reaction takes place in the presence of glutamine and ATP through an activated gamma-phospho-Glu-tRNA(Gln). The protein is Glutamyl-tRNA(Gln) amidotransferase subunit A of Listeria monocytogenes serotype 4b (strain F2365).